A 237-amino-acid polypeptide reads, in one-letter code: tRNA(His) guanylyltransferase (237 aa).

Aspartate 29, glycine 30, and aspartate 77 together coordinate Mg(2+). Residues 29–34 (DGKHFH) and 76–77 (SD) contribute to the GTP site.

This sequence belongs to the tRNA(His) guanylyltransferase family. The cofactor is Mg(2+).

The catalysed reaction is a 5'-end ribonucleotide-tRNA(His) + GTP + ATP + H2O = a 5'-end phospho-guanosine-ribonucleotide-tRNA(His) + AMP + 2 diphosphate + H(+). Adds a GMP to the 5'-end of tRNA(His) after transcription and RNase P cleavage. The chain is tRNA(His) guanylyltransferase (THG1) from Eremothecium gossypii (strain ATCC 10895 / CBS 109.51 / FGSC 9923 / NRRL Y-1056) (Yeast).